We begin with the raw amino-acid sequence, 370 residues long: UDP-N-acetylglucosamine--N-acetylmuramyl-(pentapeptide) pyrophosphoryl-undecaprenol N-acetylglucosamine transferase (370 aa).

UDP-N-acetyl-alpha-D-glucosamine contacts are provided by residues 10 to 12 (TGG), N126, S200, I255, and Q300.

This sequence belongs to the glycosyltransferase 28 family. MurG subfamily.

It is found in the cell membrane. The catalysed reaction is Mur2Ac(oyl-L-Ala-gamma-D-Glu-L-Lys-D-Ala-D-Ala)-di-trans,octa-cis-undecaprenyl diphosphate + UDP-N-acetyl-alpha-D-glucosamine = beta-D-GlcNAc-(1-&gt;4)-Mur2Ac(oyl-L-Ala-gamma-D-Glu-L-Lys-D-Ala-D-Ala)-di-trans,octa-cis-undecaprenyl diphosphate + UDP + H(+). It participates in cell wall biogenesis; peptidoglycan biosynthesis. Its function is as follows. Cell wall formation. Catalyzes the transfer of a GlcNAc subunit on undecaprenyl-pyrophosphoryl-MurNAc-pentapeptide (lipid intermediate I) to form undecaprenyl-pyrophosphoryl-MurNAc-(pentapeptide)GlcNAc (lipid intermediate II). The chain is UDP-N-acetylglucosamine--N-acetylmuramyl-(pentapeptide) pyrophosphoryl-undecaprenol N-acetylglucosamine transferase from Lactobacillus johnsonii (strain CNCM I-12250 / La1 / NCC 533).